A 31-amino-acid polypeptide reads, in one-letter code: Alpha-conotoxin Li1.12 (31 aa).

A propeptide spanning residues 1–15 (AGNAKMSALMALTIR) is cleaved from the precursor. 2 disulfides stabilise this stretch: Cys-17/Cys-23 and Cys-18/Cys-30. At Cys-30 the chain carries Cysteine amide.

The protein belongs to the conotoxin A superfamily. Expressed by the venom duct.

Its subcellular location is the secreted. Its function is as follows. Alpha-conotoxins act on postsynaptic membranes, they bind to the nicotinic acetylcholine receptors (nAChR) and thus inhibit them. This toxin inhibits alpha-3-beta-4, alpha-6/alpha-3-beta-4, and alpha-2-beta-4 nAChRs. The sequence is that of Alpha-conotoxin Li1.12 from Conus lividus (Livid cone).